We begin with the raw amino-acid sequence, 222 residues long: 3-dehydroquinate dehydratase (222 aa).

Residues 29-31 (ELR) and R55 each bind 3-dehydroquinate. H112 acts as the Proton donor/acceptor in catalysis. Residue K139 is the Schiff-base intermediate with substrate of the active site. The 3-dehydroquinate site is built by R178, S199, and Q203.

This sequence belongs to the type-I 3-dehydroquinase family. As to quaternary structure, homodimer.

The enzyme catalyses 3-dehydroquinate = 3-dehydroshikimate + H2O. It participates in metabolic intermediate biosynthesis; chorismate biosynthesis; chorismate from D-erythrose 4-phosphate and phosphoenolpyruvate: step 3/7. In terms of biological role, involved in the third step of the chorismate pathway, which leads to the biosynthesis of aromatic amino acids. Catalyzes the cis-dehydration of 3-dehydroquinate (DHQ) and introduces the first double bond of the aromatic ring to yield 3-dehydroshikimate. The protein is 3-dehydroquinate dehydratase of Dehalococcoides mccartyi (strain ATCC BAA-2266 / KCTC 15142 / 195) (Dehalococcoides ethenogenes (strain 195)).